Consider the following 905-residue polypeptide: Coatomer subunit beta' (905 aa).

8 WD repeats span residues 13 to 52 (ARSD…LVKT), 55 to 94 (VCDL…RVHM), 97 to 136 (AHSD…SCSQ), 140 to 180 (GHTH…PNFT), 183 to 224 (GHEK…CVQT), 227 to 266 (GHAQ…LEST), 350 to 388 (SCEI…NKSF), and 390 to 425 (SAQE…KSFK). K627 is subject to N6-acetyllysine. A WD 9 repeat occupies 746–783 (IRTGRLPEAAFLARTYLPSQVSRVVKLWRENLSKVNQK). Residues 837-873 (EEAKGFQPSRPTAQQEPDGKPASSPVIMASQTTHKEE) are disordered. A Phosphoserine modification is found at S859. The stretch at 867 to 891 (QTTHKEEKSLLELEVDLDNLELEDI) forms a coiled coil.

Belongs to the WD repeat COPB2 family. As to quaternary structure, oligomeric complex that consists of at least the alpha, beta, beta', gamma, delta, epsilon and zeta subunits. Probably interacts with PEX11A. Interacts with SCYL1. Interacts with JAGN1.

The protein resides in the cytoplasm. Its subcellular location is the cytosol. The protein localises to the golgi apparatus membrane. It localises to the cytoplasmic vesicle. It is found in the COPI-coated vesicle membrane. Functionally, the coatomer is a cytosolic protein complex that binds to dilysine motifs and reversibly associates with Golgi non-clathrin-coated vesicles, which further mediate biosynthetic protein transport from the ER, via the Golgi up to the trans Golgi network. Coatomer complex is required for budding from Golgi membranes, and is essential for the retrograde Golgi-to-ER transport of dilysine-tagged proteins. In mammals, the coatomer can only be recruited by membranes associated to ADP-ribosylation factors (ARFs), which are small GTP-binding proteins; the complex also influences the Golgi structural integrity, as well as the processing, activity, and endocytic recycling of LDL receptors. This coatomer complex protein, essential for Golgi budding and vesicular trafficking, is a selective binding protein (RACK) for protein kinase C, epsilon type. It binds to Golgi membranes in a GTP-dependent manner. This is Coatomer subunit beta' (Copb2) from Mus musculus (Mouse).